The primary structure comprises 297 residues: Nucleotide-binding protein BMA10229_A1510 (297 aa).

Residue 8-15 (GISGSGKS) coordinates ATP. 57-60 (DARS) is a GTP binding site.

The protein belongs to the RapZ-like family.

In terms of biological role, displays ATPase and GTPase activities. This chain is Nucleotide-binding protein BMA10229_A1510, found in Burkholderia mallei (strain NCTC 10229).